The following is a 282-amino-acid chain: HTH-type transcriptional activator RhaR (282 aa).

The 99-residue stretch at 179 to 277 folds into the HTH araC/xylS-type domain; the sequence is DKLITRLAAS…GMTPSQWRHL (99 aa). 2 consecutive DNA-binding regions (H-T-H motif) follow at residues 196–217 and 244–267; these read DKFC…RQQT and ISDI…TRET.

In terms of assembly, binds DNA as a dimer.

It localises to the cytoplasm. In terms of biological role, activates expression of the rhaSR operon in response to L-rhamnose. The sequence is that of HTH-type transcriptional activator RhaR from Escherichia coli O139:H28 (strain E24377A / ETEC).